A 514-amino-acid chain; its full sequence is Chromosomal replication initiator protein DnaA (514 aa).

The tract at residues 1-90 (MSVELWQQCV…KRSRTPRAAI (90 aa)) is domain I, interacts with DnaA modulators. Positions 91-177 (VPSQTHVAPP…QVEGALKHTS (87 aa)) are domain II. Residues 178-394 (YLNRTFTFEN…GALKRVIAHS (217 aa)) form a domain III, AAA+ region region. The ATP site is built by Gly-222, Gly-224, Lys-225, and Thr-226. The tract at residues 395–514 (HFMGRPITIE…YKNLLRTLTT (120 aa)) is domain IV, binds dsDNA.

The protein belongs to the DnaA family. Oligomerizes as a right-handed, spiral filament on DNA at oriC.

It is found in the cytoplasm. Plays an essential role in the initiation and regulation of chromosomal replication. ATP-DnaA binds to the origin of replication (oriC) to initiate formation of the DNA replication initiation complex once per cell cycle. Binds the DnaA box (a 9 base pair repeat at the origin) and separates the double-stranded (ds)DNA. Forms a right-handed helical filament on oriC DNA; dsDNA binds to the exterior of the filament while single-stranded (ss)DNA is stabiized in the filament's interior. The ATP-DnaA-oriC complex binds and stabilizes one strand of the AT-rich DNA unwinding element (DUE), permitting loading of DNA polymerase. After initiation quickly degrades to an ADP-DnaA complex that is not apt for DNA replication. Binds acidic phospholipids. The chain is Chromosomal replication initiator protein DnaA from Pseudomonas aeruginosa (strain LESB58).